A 180-amino-acid polypeptide reads, in one-letter code: ATP-dependent protease subunit HslV (180 aa).

The active site involves Thr-6. Residues Ala-164, Cys-167, and Thr-170 each contribute to the Na(+) site.

This sequence belongs to the peptidase T1B family. HslV subfamily. As to quaternary structure, a double ring-shaped homohexamer of HslV is capped on each side by a ring-shaped HslU homohexamer. The assembly of the HslU/HslV complex is dependent on binding of ATP.

It is found in the cytoplasm. The catalysed reaction is ATP-dependent cleavage of peptide bonds with broad specificity.. Its activity is regulated as follows. Allosterically activated by HslU binding. Functionally, protease subunit of a proteasome-like degradation complex believed to be a general protein degrading machinery. The chain is ATP-dependent protease subunit HslV from Borrelia turicatae (strain 91E135).